The chain runs to 95 residues: Fatty acid-binding protein, liver (95 aa).

N6-succinyllysine occurs at positions 13 and 18. A Phosphoserine modification is found at Ser-21. Lys-28 carries the post-translational modification N6-succinyllysine. Phosphothreonine is present on Thr-33. Residue Ser-38 is modified to Phosphoserine. Residues Lys-39, Lys-47, and Lys-59 each carry the N6-succinyllysine modification. Ser-69 carries the phosphoserine modification. Lys-90 bears the N6-succinyllysine mark.

Belongs to the calycin superfamily. Fatty-acid binding protein (FABP) family. Monomer.

The protein resides in the cytoplasm. This protein binds free fatty acids and their coenzyme A derivatives, bilirubin, and some other small molecules in the cytoplasm; it may be involved in intracellular lipid transport. This is Fatty acid-binding protein, liver (FABP1) from Chaetophractus villosus (South American armadillo).